The following is a 315-amino-acid chain: tRNA dimethylallyltransferase (315 aa).

An ATP-binding site is contributed by 10–17; that stretch reads GPTAVGKT. Position 12–17 (12–17) interacts with substrate; the sequence is TAVGKT. Residues 35–38 form an interaction with substrate tRNA region; the sequence is DSMQ.

It belongs to the IPP transferase family. As to quaternary structure, monomer. Mg(2+) serves as cofactor.

The enzyme catalyses adenosine(37) in tRNA + dimethylallyl diphosphate = N(6)-dimethylallyladenosine(37) in tRNA + diphosphate. Catalyzes the transfer of a dimethylallyl group onto the adenine at position 37 in tRNAs that read codons beginning with uridine, leading to the formation of N6-(dimethylallyl)adenosine (i(6)A). This Geobacillus kaustophilus (strain HTA426) protein is tRNA dimethylallyltransferase.